Consider the following 362-residue polypeptide: Chorismate synthase (362 aa).

Arginine 48 is a binding site for NADP(+). FMN-binding positions include 131-133 (RAS), 243-244 (NA), glycine 288, 303-307 (KPTSS), and arginine 329.

It belongs to the chorismate synthase family. In terms of assembly, homotetramer. Requires FMNH2 as cofactor.

It catalyses the reaction 5-O-(1-carboxyvinyl)-3-phosphoshikimate = chorismate + phosphate. It functions in the pathway metabolic intermediate biosynthesis; chorismate biosynthesis; chorismate from D-erythrose 4-phosphate and phosphoenolpyruvate: step 7/7. In terms of biological role, catalyzes the anti-1,4-elimination of the C-3 phosphate and the C-6 proR hydrogen from 5-enolpyruvylshikimate-3-phosphate (EPSP) to yield chorismate, which is the branch point compound that serves as the starting substrate for the three terminal pathways of aromatic amino acid biosynthesis. This reaction introduces a second double bond into the aromatic ring system. In Bartonella tribocorum (strain CIP 105476 / IBS 506), this protein is Chorismate synthase.